Consider the following 413-residue polypeptide: NADH:flavin oxidoreductase FG08077 (413 aa).

FMN is bound at residue 53 to 56 (APLC). Y58 contacts substrate. 2 residues coordinate FMN: A88 and Q130. 211–214 (HAAH) is a binding site for substrate. FMN-binding positions include R264 and 370–371 (GR).

This sequence belongs to the NADH:flavin oxidoreductase/NADH oxidase family. NamA subfamily. FMN serves as cofactor.

Its pathway is mycotoxin biosynthesis. NADH:flavin oxidoreductase; part of the gene cluster that mediates the biosynthesis of butenolide, a mycotoxin that shows antibiotic activity but does not seem to play a major role in the spread of head blight in wheat. Butenolide is derived from glutamic acid via a 4-acetamido-2-butenoic acid intermediate. The predicted function of the NADH:flavin oxidoreductase FG08077, the cytochrome P450 monooxygenase FG08079, the decarboxylase FG08083, and the putative acetyltransferase FG08082 are consistent with this pathway, however, the respective activities of the butelonide biosynthesis cluster enzymes have still to be experimentally determined. The sequence is that of NADH:flavin oxidoreductase FG08077 from Gibberella zeae (strain ATCC MYA-4620 / CBS 123657 / FGSC 9075 / NRRL 31084 / PH-1) (Wheat head blight fungus).